The primary structure comprises 128 residues: 2-iminobutanoate/2-iminopropanoate deaminase (128 aa).

Belongs to the RutC family.

It is found in the cytoplasm. The catalysed reaction is 2-iminobutanoate + H2O = 2-oxobutanoate + NH4(+). It catalyses the reaction 2-iminopropanoate + H2O = pyruvate + NH4(+). Catalyzes the hydrolytic deamination of enamine/imine intermediates that form during the course of normal metabolism. May facilitate the release of ammonia from these potentially toxic reactive metabolites, reducing their impact on cellular components. It may act on enamine/imine intermediates formed by several types of pyridoxal-5'-phosphate-dependent dehydratases including L-threonine dehydratase. Preferentially digests Leu and Met in cooperation with L-amino acid oxidase, but digests Phe poorly. This chain is 2-iminobutanoate/2-iminopropanoate deaminase, found in Dermatophagoides farinae (American house dust mite).